Here is a 28-residue protein sequence, read N- to C-terminus: Trypsin inhibitor 2 (28 aa).

3 cysteine pairs are disulfide-bonded: Cys3-Cys20, Cys10-Cys22, and Cys16-Cys27.

The protein belongs to the protease inhibitor I7 (squash-type serine protease inhibitor) family.

It is found in the secreted. Its function is as follows. Inhibits trypsin. The polypeptide is Trypsin inhibitor 2 (Momordica charantia (Bitter gourd)).